Here is a 1241-residue protein sequence, read N- to C-terminus: DNA-directed RNA polymerase subunit beta (1241 aa).

Residues 1186–1210 (EDEIVPTAEKRSSNQDEEALELVDN) form a disordered region. Positions 1200-1210 (QDEEALELVDN) are enriched in acidic residues.

The protein belongs to the RNA polymerase beta chain family. As to quaternary structure, the RNAP catalytic core consists of 2 alpha, 1 beta, 1 beta' and 1 omega subunit. When a sigma factor is associated with the core the holoenzyme is formed, which can initiate transcription.

It catalyses the reaction RNA(n) + a ribonucleoside 5'-triphosphate = RNA(n+1) + diphosphate. Its function is as follows. DNA-dependent RNA polymerase catalyzes the transcription of DNA into RNA using the four ribonucleoside triphosphates as substrates. In Clostridium novyi (strain NT), this protein is DNA-directed RNA polymerase subunit beta.